The chain runs to 148 residues: Lysozyme C-1 (148 aa).

A signal peptide spans 1–18 (MKALLTLGLLLLSVTAQA). Residues 19–148 (KVYNRCELAR…LSQYIRNCGV (130 aa)) enclose the C-type lysozyme domain. Cystine bridges form between cysteine 24–cysteine 146, cysteine 48–cysteine 134, cysteine 83–cysteine 99, and cysteine 95–cysteine 113. Catalysis depends on residues glutamate 53 and aspartate 71.

This sequence belongs to the glycosyl hydrolase 22 family. As to quaternary structure, monomer. In terms of tissue distribution, expressed strongly only in small intestine.

The protein localises to the secreted. The enzyme catalyses Hydrolysis of (1-&gt;4)-beta-linkages between N-acetylmuramic acid and N-acetyl-D-glucosamine residues in a peptidoglycan and between N-acetyl-D-glucosamine residues in chitodextrins.. In terms of biological role, lysozymes have primarily a bacteriolytic function; those in tissues and body fluids are associated with the monocyte-macrophage system and enhance the activity of immunoagents. Lyz1 is active against a range of Gram-positive and Gram-negative bacteria. Less effective than Lyz2 in killing Gram-negative bacteria. Lyz1 and Lyz2 are equally effective in killing Gram-positive bacteria. The polypeptide is Lysozyme C-1 (Lyz1) (Mus musculus (Mouse)).